A 136-amino-acid chain; its full sequence is MKFTSVIALVATAATLVGAVPFETNAERLARGLPPLPPARRASGVEAAKPKPSPSHGCSTGPVQCCNDLVDRSNHTVGILIGLLGIVLGPVTGLFGLGCSPLLGGGAKCQSQTVCCSDNKFSGIINIGCSPINIGL.

A signal peptide spans 1 to 19 (MKFTSVIALVATAATLVGA). Cystine bridges form between Cys-58–Cys-115, Cys-65–Cys-109, Cys-66–Cys-99, and Cys-116–Cys-129. N-linked (GlcNAc...) asparagine glycosylation occurs at Asn-74.

The protein belongs to the fungal hydrophobin family. In terms of assembly, self-assembles to form functional amyloid fibrils called rodlets. Self-assembly into fibrillar rodlets occurs spontaneously at hydrophobic:hydrophilic interfaces and the rodlets further associate laterally to form amphipathic monolayers.

Its subcellular location is the secreted. It localises to the cell wall. Its function is as follows. Aerial growth, conidiation, and dispersal of filamentous fungi in the environment rely upon a capability of their secreting small amphipathic proteins called hydrophobins (HPBs) with low sequence identity. Class I can self-assemble into an outermost layer of rodlet bundles on aerial cell surfaces, conferring cellular hydrophobicity that supports fungal growth, development and dispersal; whereas Class II form highly ordered films at water-air interfaces through intermolecular interactions but contribute nothing to the rodlet structure. Hydph16 is a class I hydrophobin that has specific functions in aerial mycelium formation, cell wall stress protection, and cell wall structure formation, but does not seem to be involved in mycelial hydrophobicity. Specifically functions in resisting cell wall synthesis inhibitors. This chain is Class I hydrophobin 16, found in Pleurotus ostreatus (strain PC15) (Oyster mushroom).